The primary structure comprises 356 residues: MKILKNDAYIRALLRESVDITPVWMMRQAGRYLPEYKKIRAQAGDFMSLCKNTQLACEVTLQPLRRYPLDAAILFSDILTIPDAMGLGLYFTTGEGPKFHFPIRMKADIEKLPIPDPEKELRYVMDLARTVRKELAGTVPLIGFAGSPWTIATYMVEGGSSKIFSRLKAMLYTEPATLHLLLNKLTQTVILYLNAQIQAGVQSIMIFDTWGGVLSGENYRIFSLNYMHQIIEGLTRENEGCKIPVTLFTKGGGQWLEAIAETGCDAIGLDWTTDIGEARHRVGDKVALQGNMDPAVLYAPAPIIEKEVASILGAFGKGTGHIFNLGHGVHQDTPPEHVRIFVDAVHRLSKNDAASG.

Residues Arg-27–Arg-31, Asp-77, Tyr-154, Thr-209, and His-327 each bind substrate.

Belongs to the uroporphyrinogen decarboxylase family. In terms of assembly, homodimer.

The protein localises to the cytoplasm. The catalysed reaction is uroporphyrinogen III + 4 H(+) = coproporphyrinogen III + 4 CO2. Its pathway is porphyrin-containing compound metabolism; protoporphyrin-IX biosynthesis; coproporphyrinogen-III from 5-aminolevulinate: step 4/4. Functionally, catalyzes the decarboxylation of four acetate groups of uroporphyrinogen-III to yield coproporphyrinogen-III. The chain is Uroporphyrinogen decarboxylase from Hamiltonella defensa subsp. Acyrthosiphon pisum (strain 5AT).